A 335-amino-acid polypeptide reads, in one-letter code: MKLPLLGPVSVTGFQNPWFFLALLAVLLVIGLYVVQQFARRRRVLRFANMEVLERVAPPHPSRWRHVPTILLATSLVLLTTAMAGPTSDVRIPLNRAVVMLVIDVSESMASTDVPPNRLAAAKEAGKQFADQLTPAINLGLVEFAANATLLVPPTTNRAAVKAGIDSLQPAPKTATGEGIFTALQAIATVGSVMGGGEGPPPARIVLESDGAENVPLDPNAPQGAFTAARAAKAEGVQISTISFGTPYGTVDYEGATIPVPVDDQTLQKICEITDGQAFHADSLDSLKNVYSTLQRQIGYETVKGDASMAWMLLGAVVLAGAVLAGLLLNRRLPA.

Transmembrane regions (helical) follow at residues 18-38 (WFFLALLAVLLVIGLYVVQQF) and 67-87 (VPTILLATSLVLLTTAMAGPT). In terms of domain architecture, VWFA spans 98–294 (VVMLVIDVSE…DSLKNVYSTL (197 aa)). The chain crosses the membrane as a helical span at residues 309 to 329 (MAWMLLGAVVLAGAVLAGLLL).

The protein belongs to the UPF0353 family.

It is found in the cell membrane. This chain is UPF0353 protein MAP_3435c, found in Mycolicibacterium paratuberculosis (strain ATCC BAA-968 / K-10) (Mycobacterium paratuberculosis).